The following is an 81-amino-acid chain: MAGSTGERPFSDIITSIRYWVIHSVTIPSLFVGGWIFVSTGIVYDIFGTPRPSEYFTETRQQAPLISDRFNALEQMDQFTK.

Residues 21–35 traverse the membrane as a helical segment; sequence VIHSVTIPSLFVGGW. H23 is a binding site for heme.

Belongs to the PsbE/PsbF family. In terms of assembly, heterodimer of an alpha subunit and a beta subunit. PSII is composed of 1 copy each of membrane proteins PsbA, PsbB, PsbC, PsbD, PsbE, PsbF, PsbH, PsbI, PsbJ, PsbK, PsbL, PsbM, PsbT, PsbY, PsbZ, Psb30/Ycf12, at least 3 peripheral proteins of the oxygen-evolving complex and a large number of cofactors. It forms dimeric complexes. The cofactor is heme b.

Its subcellular location is the plastid. The protein resides in the chloroplast thylakoid membrane. This b-type cytochrome is tightly associated with the reaction center of photosystem II (PSII). PSII is a light-driven water:plastoquinone oxidoreductase that uses light energy to abstract electrons from H(2)O, generating O(2) and a proton gradient subsequently used for ATP formation. It consists of a core antenna complex that captures photons, and an electron transfer chain that converts photonic excitation into a charge separation. The protein is Cytochrome b559 subunit alpha of Euglena gracilis.